The primary structure comprises 425 residues: Serine--tRNA ligase (425 aa).

230–232 (TAE) contacts L-serine. ATP is bound at residue 261 to 263 (RSE). E284 is a binding site for L-serine. Residue 348–351 (EISS) participates in ATP binding. S384 is an L-serine binding site.

Belongs to the class-II aminoacyl-tRNA synthetase family. Type-1 seryl-tRNA synthetase subfamily. Homodimer. The tRNA molecule binds across the dimer.

It is found in the cytoplasm. The enzyme catalyses tRNA(Ser) + L-serine + ATP = L-seryl-tRNA(Ser) + AMP + diphosphate + H(+). It catalyses the reaction tRNA(Sec) + L-serine + ATP = L-seryl-tRNA(Sec) + AMP + diphosphate + H(+). The protein operates within aminoacyl-tRNA biosynthesis; selenocysteinyl-tRNA(Sec) biosynthesis; L-seryl-tRNA(Sec) from L-serine and tRNA(Sec): step 1/1. Catalyzes the attachment of serine to tRNA(Ser). Is also able to aminoacylate tRNA(Sec) with serine, to form the misacylated tRNA L-seryl-tRNA(Sec), which will be further converted into selenocysteinyl-tRNA(Sec). The polypeptide is Serine--tRNA ligase (Streptococcus agalactiae serotype Ia (strain ATCC 27591 / A909 / CDC SS700)).